The sequence spans 98 residues: uncharacterized protein (98 aa).

The next 2 membrane-spanning stretches (helical) occupy residues 2–22 and 70–90; these read IVTL…GLWW and AAKA…LPIL.

It is found in the cell membrane. This is an uncharacterized protein from Sinorhizobium fredii (strain NBRC 101917 / NGR234).